Here is a 601-residue protein sequence, read N- to C-terminus: Protein CT_858 (601 aa).

Belongs to the chlamydial CPn_1016/CT_858/TC_0248 family.

This Chlamydia trachomatis serovar D (strain ATCC VR-885 / DSM 19411 / UW-3/Cx) protein is Protein CT_858.